The chain runs to 253 residues: E3 ubiquitin-protein ligase MARCHF3 (253 aa).

The segment at 63-123 (SPFNDRPMCR…ELCHFRFAVE (61 aa)) adopts an RING-CH-type zinc-finger fold. Cys-71, Cys-74, Cys-87, Cys-89, His-97, Cys-100, Cys-113, and Cys-116 together coordinate Zn(2+). A run of 2 helical transmembrane segments spans residues 145–165 (LFGDMVCFLFITPLATISGWL) and 182–202 (AVGLIALTVALFTIYLFWTLV). A phosphoserine mark is found at Ser-237 and Ser-243.

Interacts with MARCHF2 and STX6. As to expression, expressed predominantly in lung, colon and spleen. Present in liver (at protein level).

The protein resides in the cytoplasmic vesicle membrane. It is found in the early endosome membrane. The catalysed reaction is S-ubiquitinyl-[E2 ubiquitin-conjugating enzyme]-L-cysteine + [acceptor protein]-L-lysine = [E2 ubiquitin-conjugating enzyme]-L-cysteine + N(6)-ubiquitinyl-[acceptor protein]-L-lysine.. Its pathway is protein modification; protein ubiquitination. Functionally, E3 ubiquitin-protein ligase which may be involved in endosomal trafficking. E3 ubiquitin ligases accept ubiquitin from an E2 ubiquitin-conjugating enzyme in the form of a thioester and then directly transfer the ubiquitin to targeted substrates. The protein is E3 ubiquitin-protein ligase MARCHF3 (Marchf3) of Rattus norvegicus (Rat).